Here is a 152-residue protein sequence, read N- to C-terminus: UPF0178 protein YE1167 (152 aa).

This sequence belongs to the UPF0178 family.

This Yersinia enterocolitica serotype O:8 / biotype 1B (strain NCTC 13174 / 8081) protein is UPF0178 protein YE1167.